Here is a 221-residue protein sequence, read N- to C-terminus: Deoxyribose-phosphate aldolase (221 aa).

Aspartate 90 functions as the Proton donor/acceptor in the catalytic mechanism. Lysine 152 acts as the Schiff-base intermediate with acetaldehyde in catalysis. Catalysis depends on lysine 181, which acts as the Proton donor/acceptor.

This sequence belongs to the DeoC/FbaB aldolase family. DeoC type 1 subfamily.

It is found in the cytoplasm. The catalysed reaction is 2-deoxy-D-ribose 5-phosphate = D-glyceraldehyde 3-phosphate + acetaldehyde. The protein operates within carbohydrate degradation; 2-deoxy-D-ribose 1-phosphate degradation; D-glyceraldehyde 3-phosphate and acetaldehyde from 2-deoxy-alpha-D-ribose 1-phosphate: step 2/2. Functionally, catalyzes a reversible aldol reaction between acetaldehyde and D-glyceraldehyde 3-phosphate to generate 2-deoxy-D-ribose 5-phosphate. In Exiguobacterium sp. (strain ATCC BAA-1283 / AT1b), this protein is Deoxyribose-phosphate aldolase.